Consider the following 361-residue polypeptide: Chorismate synthase (361 aa).

NADP(+) contacts are provided by R48 and R54. Residues 125–127 (RSS), 238–239 (NA), G278, 293–297 (KPTSS), and R319 contribute to the FMN site.

This sequence belongs to the chorismate synthase family. As to quaternary structure, homotetramer. It depends on FMNH2 as a cofactor.

It carries out the reaction 5-O-(1-carboxyvinyl)-3-phosphoshikimate = chorismate + phosphate. It functions in the pathway metabolic intermediate biosynthesis; chorismate biosynthesis; chorismate from D-erythrose 4-phosphate and phosphoenolpyruvate: step 7/7. In terms of biological role, catalyzes the anti-1,4-elimination of the C-3 phosphate and the C-6 proR hydrogen from 5-enolpyruvylshikimate-3-phosphate (EPSP) to yield chorismate, which is the branch point compound that serves as the starting substrate for the three terminal pathways of aromatic amino acid biosynthesis. This reaction introduces a second double bond into the aromatic ring system. This chain is Chorismate synthase, found in Salmonella paratyphi A (strain ATCC 9150 / SARB42).